A 251-amino-acid chain; its full sequence is Small ribosomal subunit protein uS2 (251 aa).

It belongs to the universal ribosomal protein uS2 family.

The polypeptide is Small ribosomal subunit protein uS2 (Cereibacter sphaeroides (strain ATCC 17029 / ATH 2.4.9) (Rhodobacter sphaeroides)).